A 414-amino-acid chain; its full sequence is Testis-specific Y-encoded-like protein 4 (414 aa).

2 disordered regions span residues 1–129 (MSGL…AGQK) and 391–414 (PRRG…FQSG). Residues 24–40 (ASGDPDRDQCQGLREET) show a composition bias toward basic and acidic residues. Over residues 101-112 (EAASAAEAADSS) the composition is skewed to low complexity.

The protein belongs to the nucleosome assembly protein (NAP) family.

This chain is Testis-specific Y-encoded-like protein 4 (TSPYL4), found in Homo sapiens (Human).